A 267-amino-acid chain; its full sequence is MRLTVLCAVCLLPGSLALPLPQEAGGMSELQWEQAQDYLKRFYLYDSETKNANSLEAKLKEMQKFFGLPITGMLNSRVIEIMQKPRCGVPDVAEYSLFPNSPKWTSKVVTYRIVSYTRDLPHITVDRLVSKALNMWGKEIPLHFRKVVWGTADIMIGFARGAHGDSYPFDGPGNTLAHAFAPGTGLGGDAHFDEDERWTDGSSLGINFLYAATHELGHSLGMGHSSDPNAVMYPTYGNGDPQNFKLSQDDIKGIQKLYGKRSNSRKK.

Residues 1–17 (MRLTVLCAVCLLPGSLA) form the signal peptide. Positions 18–94 (LPLPQEAGGM…PRCGVPDVAE (77 aa)) are cleaved as a propeptide — activation peptide. The Cysteine switch signature appears at 85-92 (PRCGVPDV). Cys-87 serves as a coordination point for Zn(2+). Residue Asp-153 participates in Ca(2+) binding. Zn(2+)-binding residues include His-163 and Asp-165. 4 residues coordinate Ca(2+): Asp-170, Gly-171, Gly-173, and Thr-175. His-178 lines the Zn(2+) pocket. 3 residues coordinate Ca(2+): Gly-185, Gly-187, and Asp-189. His-191 contributes to the Zn(2+) binding site. Positions 193 and 196 each coordinate Ca(2+). His-214 serves as a coordination point for Zn(2+). The active site involves Glu-215. The Zn(2+) site is built by His-218 and His-224.

The protein belongs to the peptidase M10A family. Requires Ca(2+) as cofactor. Zn(2+) is required as a cofactor.

It localises to the secreted. It is found in the extracellular space. The protein localises to the extracellular matrix. The enzyme catalyses Cleavage of 14-Ala-|-Leu-15 and 16-Tyr-|-Leu-17 in B chain of insulin. No action on collagen types I, II, IV, V. Cleaves gelatin chain alpha2(I) &gt; alpha1(I).. Degrades casein, gelatins of types I, III, IV, and V, and fibronectin. Activates procollagenase. The protein is Matrilysin (MMP7) of Homo sapiens (Human).